The following is a 486-amino-acid chain: Replication factor C large subunit (486 aa).

46–53 (GPPGSGKT) is a binding site for ATP. A disordered region spans residues 419-486 (VKKETPKKTE…KKQATLDSFF (68 aa)). Basic and acidic residues-rich tracts occupy residues 420-432 (KKET…KPKE) and 442-480 (RISE…KKQA).

This sequence belongs to the activator 1 small subunits family. RfcL subfamily. In terms of assembly, heteromultimer composed of small subunits (RfcS) and large subunits (RfcL).

In terms of biological role, part of the RFC clamp loader complex which loads the PCNA sliding clamp onto DNA. The chain is Replication factor C large subunit from Methanococcus maripaludis (strain DSM 14266 / JCM 13030 / NBRC 101832 / S2 / LL).